A 209-amino-acid chain; its full sequence is Protein ASG7 (209 aa).

The Lumenal segment spans residues 1–49 (MTTLASSIEHKTKHLAAPFENDENPWMKKYCCQCKSCKMSVPVQPWLPR). A helical transmembrane segment spans residues 50–70 (FFVFGILCPVFWLVNLLAWWF). Residues 71–184 (LQYWQPHELE…LLRKTFRDWN (114 aa)) are Cytoplasmic-facing. Residues serine 121, serine 123, and serine 125 each carry the phosphoserine modification. Phosphothreonine is present on threonine 153. The helical transmembrane segment at 185 to 205 (LRSLLGLLIDSILIIFVVLLC) threads the bilayer. Residues 206-209 (KKSR) lie on the Lumenal side of the membrane.

Its subcellular location is the endomembrane system. In terms of biological role, required for receptor inhibition of inappropriately expressed a-factor receptor (STE3) in MAT a cells. Inhibits signaling by relocalizing the G protein beta-gamma (STE4-STE18) subunit to intracellular membranes. May also be a mechanism for the down-regulation of the mating pheromone response after the zygotic fusion event, promoting the transition of the new diploid cell to vegetative growth. This is Protein ASG7 (ASG7) from Saccharomyces cerevisiae (strain ATCC 204508 / S288c) (Baker's yeast).